A 951-amino-acid polypeptide reads, in one-letter code: Bifunctional glutamine synthetase adenylyltransferase/adenylyl-removing enzyme (951 aa).

The adenylyl removase stretch occupies residues 1-445 (MSILPLPALP…VFDELIGDDA (445 aa)). The adenylyl transferase stretch occupies residues 454 to 951 (HSSYSSLWQD…VSWNKWLMGA (498 aa)).

The protein belongs to the GlnE family. Requires Mg(2+) as cofactor.

It catalyses the reaction [glutamine synthetase]-O(4)-(5'-adenylyl)-L-tyrosine + phosphate = [glutamine synthetase]-L-tyrosine + ADP. The enzyme catalyses [glutamine synthetase]-L-tyrosine + ATP = [glutamine synthetase]-O(4)-(5'-adenylyl)-L-tyrosine + diphosphate. In terms of biological role, involved in the regulation of glutamine synthetase GlnA, a key enzyme in the process to assimilate ammonia. When cellular nitrogen levels are high, the C-terminal adenylyl transferase (AT) inactivates GlnA by covalent transfer of an adenylyl group from ATP to specific tyrosine residue of GlnA, thus reducing its activity. Conversely, when nitrogen levels are low, the N-terminal adenylyl removase (AR) activates GlnA by removing the adenylyl group by phosphorolysis, increasing its activity. The regulatory region of GlnE binds the signal transduction protein PII (GlnB) which indicates the nitrogen status of the cell. The polypeptide is Bifunctional glutamine synthetase adenylyltransferase/adenylyl-removing enzyme (Pectobacterium atrosepticum (strain SCRI 1043 / ATCC BAA-672) (Erwinia carotovora subsp. atroseptica)).